The following is a 290-amino-acid chain: Membrane-spanning 4-domains subfamily A member 8 (290 aa).

The segment covering 1–21 (MNRPTAQGAVNLSGSKFSTAK) has biased composition (polar residues). Positions 1 to 25 (MNRPTAQGAVNLSGSKFSTAKSWEP) are disordered. The Cytoplasmic portion of the chain corresponds to 1–108 (MNRPTAQGAV…PAQRVLKKGQ (108 aa)). The chain crosses the membrane as a helical span at residues 109–129 (VLGAIQILIGLVHIGLGSIMI). Residues 130–138 (TNLFSHYTP) lie on the Extracellular side of the membrane. The chain crosses the membrane as a helical span at residues 139–159 (VSLYGGFPFWGGIWFIISGSL). Topologically, residues 160-174 (SVAAETQPNSPCLLN) are cytoplasmic. Residues 175–195 (GSVGLNIFSAICSAVGIMLFI) traverse the membrane as a helical segment. Residues 196 to 220 (TDISISSGYIYPSYYPYQENLGVRT) are Extracellular-facing. Residues 221-241 (GVAISSVLLIFCLLELSIASV) traverse the membrane as a helical segment. Residues 242–290 (SSHFGCQVACCHYNNPGVVIPNVYAANPVVIPEPPNPIPSYSEVVQDSR) lie on the Cytoplasmic side of the membrane.

It belongs to the MS4A family. In terms of tissue distribution, expressed strongly in intestine and colon and minimally in lung and ovary.

It localises to the membrane. May be involved in signal transduction as a component of a multimeric receptor complex. The polypeptide is Membrane-spanning 4-domains subfamily A member 8 (Ms4a8) (Mus musculus (Mouse)).